Consider the following 209-residue polypeptide: MTYETNTPTEESIIPKHEDGEEYNSIYLSRFEKDISISQTLDFSQFMQTQILLTAKRKALELGDDRSPINNDPYNIRRSDFDELSEYTASKSPSIISEASHNSPSRELDDSGDENTSKLTGTKQSMLKARNRQAAQKCRIKKKKYLQTLQDQVNYYTSENKELLQSANDLREEIIKLRTLVFAHRDCPVSKACSKALFLMGKEKPLTPP.

A compositionally biased stretch (polar residues) spans 90 to 103 (SKSPSIISEASHNS). The segment at 90–133 (SKSPSIISEASHNSPSRELDDSGDENTSKLTGTKQSMLKARNRQ) is disordered. Residues 121–184 (GTKQSMLKAR…IKLRTLVFAH (64 aa)) enclose the bZIP domain. A basic motif region spans residues 123–161 (KQSMLKARNRQAAQKCRIKKKKYLQTLQDQVNYYTSENK). The tract at residues 163–177 (LLQSANDLREEIIKL) is leucine-zipper.

It belongs to the bZIP family.

It is found in the nucleus. This is Transcription factor atf31 (atf31) from Schizosaccharomyces pombe (strain 972 / ATCC 24843) (Fission yeast).